The following is a 317-amino-acid chain: Heme A synthase (317 aa).

The Cytoplasmic portion of the chain corresponds to 1–6 (MQRSLK). The helical transmembrane segment at 7–27 (WFASATTLAMLFVLIGGALVT) threads the bilayer. The Extracellular segment spans residues 28 to 62 (KTGSGMGCGRSWPLCNGQWVPDHITPELIIELSHR). Cysteines 35 and 42 form a disulfide. Residue Glu-58 is part of the active site. His-61 serves as a coordination point for heme o. Residues 63–83 (LVSGLAGIMVLILSIWAWRAI) form a helical membrane-spanning segment. The Cytoplasmic segment spans residues 84 to 90 (GHVQETK). The chain crosses the membrane as a helical span at residues 91 to 111 (FLAVISFVFLVLQGLIGAAAV). Topologically, residues 112–121 (VWGQSDFVLA) are extracellular. Residues 122 to 142 (LHFGISLISFAAVLLLTLLIF) traverse the membrane as a helical segment. Residue His-123 coordinates heme o. The Cytoplasmic portion of the chain corresponds to 143–159 (EIDKTFSAASLSLDGKM). Residues 160 to 180 (RFHIYGITIYSYIVVYTGALV) form a helical membrane-spanning segment. At 181–211 (RHTNASLACPSWPLCAKTRLLPVQFHEWVQM) the chain is on the extracellular side. Cys-189 and Cys-195 form a disulfide bridge. The chain crosses the membrane as a helical span at residues 212–232 (GHRLAAAVIIIWIAAAAIHAV). Position 213 (His-213) interacts with heme b. Residues 233-243 (RHYRRQPVIYY) lie on the Cytoplasmic side of the membrane. Residues 244–264 (GWLIALLLVLAQMTTGALVVF) traverse the membrane as a helical segment. Topologically, residues 265 to 270 (TQLNLY) are extracellular. A helical membrane pass occupies residues 271-291 (IALAHAFFISCLFGVLSYLLL). A heme b-binding site is contributed by His-275. Topologically, residues 292–317 (LALRTRRAPVKAADHSAGEAAPATLK) are cytoplasmic.

This sequence belongs to the COX15/CtaA family. Type 1 subfamily. As to quaternary structure, interacts with CtaB. Heme b is required as a cofactor.

Its subcellular location is the cell membrane. It catalyses the reaction Fe(II)-heme o + 2 A + H2O = Fe(II)-heme a + 2 AH2. It functions in the pathway porphyrin-containing compound metabolism; heme A biosynthesis; heme A from heme O: step 1/1. In terms of biological role, catalyzes the conversion of heme O to heme A by two successive hydroxylations of the methyl group at C8. The first hydroxylation forms heme I, the second hydroxylation results in an unstable dihydroxymethyl group, which spontaneously dehydrates, resulting in the formyl group of heme A. This is Heme A synthase from Geobacillus kaustophilus (strain HTA426).